A 957-amino-acid polypeptide reads, in one-letter code: Leucine--tRNA ligase (957 aa).

The 'HIGH' region motif lies at 66–77 (PYPSGAGLHVGH). The short motif at 728 to 732 (KMGKS) is the 'KMSKS' region element. Lys-731 serves as a coordination point for ATP.

The protein belongs to the class-I aminoacyl-tRNA synthetase family.

The protein resides in the cytoplasm. It carries out the reaction tRNA(Leu) + L-leucine + ATP = L-leucyl-tRNA(Leu) + AMP + diphosphate. The polypeptide is Leucine--tRNA ligase (Streptomyces griseus subsp. griseus (strain JCM 4626 / CBS 651.72 / NBRC 13350 / KCC S-0626 / ISP 5235)).